A 558-amino-acid chain; its full sequence is Glutamine-dependent NAD(+) synthetase (558 aa).

Residues 2 to 262 (FTIALAQLNP…LALLSYDLSS (261 aa)) enclose the CN hydrolase domain. The active-site Proton acceptor; for glutaminase activity is the Glu-42. The active-site For glutaminase activity is Lys-117. Residue Tyr-123 participates in L-glutamine binding. The active-site Nucleophile; for glutaminase activity is Cys-153. L-glutamine is bound by residues Ser-190 and Lys-196. Residues 284–558 (ALVLGVGDYL…IAQAFHPQGS (275 aa)) form a ligase region. 304–311 (GLSGGIDS) contacts ATP. Asn-387 contacts deamido-NAD(+). ATP is bound at residue Thr-411. Glu-416 and Lys-526 together coordinate deamido-NAD(+).

It in the C-terminal section; belongs to the NAD synthetase family.

It catalyses the reaction deamido-NAD(+) + L-glutamine + ATP + H2O = L-glutamate + AMP + diphosphate + NAD(+) + H(+). It participates in cofactor biosynthesis; NAD(+) biosynthesis; NAD(+) from deamido-NAD(+) (L-Gln route): step 1/1. Functionally, catalyzes the ATP-dependent amidation of deamido-NAD to form NAD. Uses L-glutamine as a nitrogen source. The polypeptide is Glutamine-dependent NAD(+) synthetase (Synechocystis sp. (strain ATCC 27184 / PCC 6803 / Kazusa)).